We begin with the raw amino-acid sequence, 472 residues long: Glycine--tRNA ligase (472 aa).

Residues Arg-109 and Glu-174 each coordinate substrate. ATP-binding positions include 206-208 (RNE), 216-221 (FRTREF), 293-294 (EL), and 337-340 (GLTR). Residue 221–225 (FEQME) participates in substrate binding. 333 to 337 (EPAAG) lines the substrate pocket.

Belongs to the class-II aminoacyl-tRNA synthetase family. In terms of assembly, homodimer.

The protein resides in the cytoplasm. It catalyses the reaction tRNA(Gly) + glycine + ATP = glycyl-tRNA(Gly) + AMP + diphosphate. Catalyzes the attachment of glycine to tRNA(Gly). This chain is Glycine--tRNA ligase, found in Cutibacterium acnes (strain DSM 16379 / KPA171202) (Propionibacterium acnes).